Here is a 109-residue protein sequence, read N- to C-terminus: Small ribosomal subunit protein uS17 (109 aa).

Belongs to the universal ribosomal protein uS17 family. As to quaternary structure, part of the 30S ribosomal subunit.

One of the primary rRNA binding proteins, it binds specifically to the 5'-end of 16S ribosomal RNA. The chain is Small ribosomal subunit protein uS17 from Methanococcus vannielii.